A 277-amino-acid polypeptide reads, in one-letter code: 3-methyl-2-oxobutanoate hydroxymethyltransferase (277 aa).

2 residues coordinate Mg(2+): aspartate 53 and aspartate 96. 3-methyl-2-oxobutanoate contacts are provided by residues 53–54, aspartate 96, and lysine 126; that span reads DS. Mg(2+) is bound at residue glutamate 128. Glutamate 195 functions as the Proton acceptor in the catalytic mechanism.

It belongs to the PanB family. As to quaternary structure, homodecamer; pentamer of dimers. Mg(2+) serves as cofactor.

The protein resides in the cytoplasm. It carries out the reaction 3-methyl-2-oxobutanoate + (6R)-5,10-methylene-5,6,7,8-tetrahydrofolate + H2O = 2-dehydropantoate + (6S)-5,6,7,8-tetrahydrofolate. It functions in the pathway cofactor biosynthesis; (R)-pantothenate biosynthesis; (R)-pantoate from 3-methyl-2-oxobutanoate: step 1/2. Functionally, catalyzes the reversible reaction in which hydroxymethyl group from 5,10-methylenetetrahydrofolate is transferred onto alpha-ketoisovalerate to form ketopantoate. The polypeptide is 3-methyl-2-oxobutanoate hydroxymethyltransferase (Prosthecochloris aestuarii (strain DSM 271 / SK 413)).